The chain runs to 610 residues: Oxidoreductase ptaE (610 aa).

The N-terminal stretch at 1-20 is a signal peptide; that stretch reads MFQSILFLAFYGRPVFGSAA. Plastocyanin-like domains lie at 67–181 and 191–344; these read QIIS…HGPS and PWLL…IVRY. N-linked (GlcNAc...) asparagine glycans are attached at residues Asn-105, Asn-111, Asn-262, Asn-277, Asn-330, Asn-356, Asn-401, Asn-409, Asn-427, and Asn-602. One can recognise a Plastocyanin-like 3 domain in the interval 425–568; the sequence is YVNWSEPSVK…IAIQFLEQPS (144 aa).

Belongs to the multicopper oxidase family.

Its pathway is secondary metabolite biosynthesis. Its function is as follows. Oxidoreductase; part of the gene cluster that mediates the biosynthesis of pestheic acid, a diphenyl ether which is a biosynthetic precursor of the unique chloropupukeananes. The biosynthesis initiates from condensation of acetate and malonate units catalyzed by the non-reducing PKS ptaA. As the ptaA protein is TE/CLC domain-deficient, hydrolysis and Claisen cyclization of the polyketide could be catalyzed by ptaB containing a beta-lactamase domain. The ptaB protein might hydrolyze the thioester bond between the ACP of ptaA and the intermediate to release atrochrysone carboxylic acid, which is spontaneously dehydrated to form endocrocin anthrone. Endocrocin anthrone is then converted to endocrocin, catalyzed by the anthrone oxygenase ptaC. Spontaneous decarboxylation of endocrocin occurs to generate emodin. An O-methyltransferase (ptaH or ptaI) could methylate emodin to form physcion. PtaJ could then catalyze the oxidative cleavage of physcion, and rotation of the intermediate could then afford desmethylisosulochrin. PtaF, a putative NADH-dependent oxidoreductase, might also participate in the oxidative cleavage step. Desmethylisosulochrin is then transformed by another O-methyltransferase (ptaH or ptaI) to form isosulochrin. Chlorination of isosulochrin by ptaM in the cyclohexadienone B ring then produces chloroisosulochrin. PtaE is responsible for the oxidative coupling reactions of both benzophenones isosulouchrin and chloroisosulochrin to RES-1214-1 and pestheic acid respectively, regardless of chlorination. In Pestalotiopsis fici (strain W106-1 / CGMCC3.15140), this protein is Oxidoreductase ptaE.